Reading from the N-terminus, the 236-residue chain is Small ribosomal subunit protein uS2c (236 aa).

It belongs to the universal ribosomal protein uS2 family.

It is found in the plastid. The protein localises to the chloroplast. In Illicium oligandrum (Star anise), this protein is Small ribosomal subunit protein uS2c (rps2).